Reading from the N-terminus, the 314-residue chain is Versiconal hemiacetal acetate esterase (314 aa).

An Involved in the stabilization of the negatively charged intermediate by the formation of the oxyanion hole motif is present at residues 85–87 (HGG). Active-site residues include Ser-154, Asp-255, and His-285.

This sequence belongs to the 'GDXG' lipolytic enzyme family.

The catalysed reaction is (2S,3S)-versiconal hemiacetal acetate + H2O = (2S-3S)-versiconal hemiacetal + acetate + H(+). It catalyses the reaction (3S)-versiconol acetate + H2O = (S)-versiconol + acetate + H(+). It functions in the pathway mycotoxin biosynthesis; aflatoxin biosynthesis. Functionally, versiconal hemiacetal acetate esterase; part of the gene cluster that mediates the biosynthesis of aflatoxins, a group of polyketide-derived furanocoumarins, and part of the most toxic and carcinogenic compounds among the known mycotoxins. The four major aflatoxins produced by A.parasiticus are aflatoxin B1 (AFB1), aflatoxin B2 (AFB2), aflatoxin G1 (AFG1) and aflatoxin G2 (AFG2). Within the aflatoxin pathway, the versiconal hemiacetal acetate esterase aflJ converts versiconal hemiacetal acetate (VHA) into versiconal (VAL). The biosynthesis of aflatoxins begins with the norsolorinic acid synthase aflC that combines a hexanoyl starter unit produced by the fatty acid synthase aflA/aflB and 7 malonyl-CoA extender units to synthesize the precursor NOR. The second step is the conversion of NOR to averantin and requires the norsolorinic acid ketoreductase aflD, which catalyzes the dehydration of norsolorinic acid to form (1'S)-averantin. The norsolorinic acid reductases aflE and aflF may also play a role in the conversion of NOR to AVN. The cytochrome P450 monooxygenase aflG then catalyzes the hydroxylation of AVN to 5'hydroxyaverantin (HAVN). The next step is performed by the 5'-hydroxyaverantin dehydrogenase aflH that transforms HAVN to 5'-oxoaverantin (OAVN) which is further converted to averufin (AVF) by aflK that plays a dual role in the pathway, as a 5'-oxoaverantin cyclase that mediates conversion of 5'-oxoaverantin, as well as a versicolorin B synthase in a later step in the pathway. The averufin oxidase aflI catalyzes the conversion of AVF to versiconal hemiacetal acetate (VHA). VHA is then the substrate for the versiconal hemiacetal acetate esterase aflJ to yield versiconal (VAL). Versicolorin B synthase aflK then converts VAL to versicolorin B (VERB) by closing the bisfuran ring of aflatoxin which is required for DNA-binding, thus giving to aflatoxin its activity as a mutagen. Then, the activity of the versicolorin B desaturase aflL leads to versicolorin A (VERA). A branch point starts from VERB since it can also be converted to dihydrodemethylsterigmatocystin (DMDHST), probably also by aflL, VERA being a precursor for aflatoxins B1 and G1, and DMDHST for aflatoxins B2 and G2. Next, the versicolorin reductase aflM and the cytochrome P450 monooxygenase aflN are involved in conversion of VERA to demethylsterigmatocystin (DMST). AflX and aflY seem also involved in this step, through probable aflX-mediated epoxide ring-opening step following versicolorin A oxidation and aflY-mediated Baeyer-Villiger oxidation required for the formation of the xanthone ring. The methyltransferase aflO then leads to the modification of DMST to sterigmatocystin (ST), and of DMDHST to dihydrosterigmatocystin (DHST). Both ST and DHST are then substrates of the O-methyltransferase aflP to yield O-methylsterigmatocystin (OMST) and dihydro-O-methylsterigmatocystin (DHOMST), respectively. Finally OMST is converted to aflatoxins B1 and G1, and DHOMST to aflatoxins B2 and G2, via the action of several enzymes including O-methylsterigmatocystin oxidoreductase aflQ, the cytochrome P450 monooxygenase aflU, but also the NADH-dependent flavin oxidoreductase nadA which is specifically required for the synthesis of AFG1. The protein is Versiconal hemiacetal acetate esterase of Aspergillus parasiticus (strain ATCC 56775 / NRRL 5862 / SRRC 143 / SU-1).